Here is a 401-residue protein sequence, read N- to C-terminus: Steroid C26-monooxygenase (401 aa).

Cysteine 343 lines the heme pocket.

The protein belongs to the cytochrome P450 family. Heme serves as cofactor.

The enzyme catalyses cholest-4-en-3-one + 6 reduced [2Fe-2S]-[ferredoxin] + 3 O2 + 5 H(+) = (25R)-3-oxocholest-4-en-26-oate + 6 oxidized [2Fe-2S]-[ferredoxin] + 4 H2O. It participates in steroid metabolism; cholesterol degradation. Its function is as follows. Involved in the utilization of cholesterol as the sole carbon and energy source by degrading the side chain. Primarily catalyzes the sequential oxidation of the terminal methyl of cholest-4-en-3-one into (25R)-26-hydroxycholest-4-en-3-one (alcohol), (25R)-26-oxocholest-4-en-3-one (aldehyde), to finally yield the carboxylic acid (25R)-3-oxocholest-4-en-26-oate. Also able to sequentially oxidize cholesterol itself, not only cholest-4-en-3-one. The protein is Steroid C26-monooxygenase of Mycolicibacterium smegmatis (strain ATCC 700084 / mc(2)155) (Mycobacterium smegmatis).